The chain runs to 702 residues: Elongation factor G 2 (702 aa).

One can recognise a tr-type G domain in the interval Glu8–Val290. GTP contacts are provided by residues Ala17 to Thr24, Asp88 to His92, and Asn142 to Asp145.

It belongs to the TRAFAC class translation factor GTPase superfamily. Classic translation factor GTPase family. EF-G/EF-2 subfamily.

It localises to the cytoplasm. Functionally, catalyzes the GTP-dependent ribosomal translocation step during translation elongation. During this step, the ribosome changes from the pre-translocational (PRE) to the post-translocational (POST) state as the newly formed A-site-bound peptidyl-tRNA and P-site-bound deacylated tRNA move to the P and E sites, respectively. Catalyzes the coordinated movement of the two tRNA molecules, the mRNA and conformational changes in the ribosome. The sequence is that of Elongation factor G 2 from Cupriavidus metallidurans (strain ATCC 43123 / DSM 2839 / NBRC 102507 / CH34) (Ralstonia metallidurans).